The primary structure comprises 257 residues: Aspartate/glutamate leucyltransferase (257 aa).

This sequence belongs to the R-transferase family. Bpt subfamily.

Its subcellular location is the cytoplasm. The enzyme catalyses N-terminal L-glutamyl-[protein] + L-leucyl-tRNA(Leu) = N-terminal L-leucyl-L-glutamyl-[protein] + tRNA(Leu) + H(+). The catalysed reaction is N-terminal L-aspartyl-[protein] + L-leucyl-tRNA(Leu) = N-terminal L-leucyl-L-aspartyl-[protein] + tRNA(Leu) + H(+). Functionally, functions in the N-end rule pathway of protein degradation where it conjugates Leu from its aminoacyl-tRNA to the N-termini of proteins containing an N-terminal aspartate or glutamate. The protein is Aspartate/glutamate leucyltransferase of Leptospira interrogans serogroup Icterohaemorrhagiae serovar copenhageni (strain Fiocruz L1-130).